A 603-amino-acid polypeptide reads, in one-letter code: D-3-phosphoglycerate dehydrogenase 1, chloroplastic (603 aa).

Residues 1–54 (MSATAAASSSIAVATNSLRNVTLSSRSPLPSAISVAFPSRGRNTLQRRLVLVSC) constitute a chloroplast transit peptide. Residues 210 to 211 (KV), Asp-230, 289 to 291 (VAR), and Asp-315 contribute to the NAD(+) site. The active site involves Arg-291. The active site involves Glu-320. The active-site Proton donor is His-339. 339-342 (HLGA) lines the NAD(+) pocket. Residues 531-603 (IILCRQVDQP…AVEEFVFLKL (73 aa)) form the ACT domain.

The protein belongs to the D-isomer specific 2-hydroxyacid dehydrogenase family. In terms of tissue distribution, ubiquitous, but highly expressed in roots. Expressed in vasculature, root and shoot meristems, distal part of cotyledons and leaves, anther, stigma and pollen grains. Detected at the tip of the cotyledons in late embryos.

The protein localises to the plastid. The protein resides in the chloroplast. The catalysed reaction is (2R)-3-phosphoglycerate + NAD(+) = 3-phosphooxypyruvate + NADH + H(+). It participates in amino-acid biosynthesis; L-serine biosynthesis; L-serine from 3-phospho-D-glycerate: step 1/3. Its activity is regulated as follows. Partially inhibited by 5 mM serine. Functionally, involved in the plastidial phosphorylated pathway of serine biosynthesis (PPSB). Required for mature pollen development. The polypeptide is D-3-phosphoglycerate dehydrogenase 1, chloroplastic (PGDH1) (Arabidopsis thaliana (Mouse-ear cress)).